Consider the following 351-residue polypeptide: (S)-coclaurine N-methyltransferase (351 aa).

S-adenosyl-L-methionine-binding positions include 91-92 (QS), 126-134 (VLDLGCGLG), 130-132 (GCG), and 153-158 (TSSVEQ). Cys326 is a catalytic residue.

Belongs to the CFA/CMAS family. In terms of tissue distribution, expressed in roots, stems, flower buds and at lower levels, in leaves. Restricted to sieve elements of the phloem adjacent or proximal to laticifers.

The protein resides in the cytoplasm. The enzyme catalyses (S)-coclaurine + S-adenosyl-L-methionine = (S)-N-methylcoclaurine + S-adenosyl-L-homocysteine + H(+). The protein operates within alkaloid biosynthesis; (S)-reticuline biosynthesis; (S)-reticuline from (S)-norcoclaurine: step 2/4. Its function is as follows. Involved in the biosynthesis of benzylisoquinoline alkaloids. N-methyltransferase methylating (S)-coclaurine. 4'-O-methylcoclaurine and norlaudanine can also be used as substrates. The chain is (S)-coclaurine N-methyltransferase from Papaver somniferum (Opium poppy).